We begin with the raw amino-acid sequence, 446 residues long: N-succinylarginine dihydrolase (446 aa).

Substrate is bound by residues 19–28 (AGLSFGNEAS), Asn110, and 137–138 (HR). Residue Glu174 is part of the active site. Residue Arg213 participates in substrate binding. His249 is a catalytic residue. Residues Asp251 and Asn364 each contribute to the substrate site. The active-site Nucleophile is the Cys370.

This sequence belongs to the succinylarginine dihydrolase family. As to quaternary structure, homodimer.

The catalysed reaction is N(2)-succinyl-L-arginine + 2 H2O + 2 H(+) = N(2)-succinyl-L-ornithine + 2 NH4(+) + CO2. Its pathway is amino-acid degradation; L-arginine degradation via AST pathway; L-glutamate and succinate from L-arginine: step 2/5. In terms of biological role, catalyzes the hydrolysis of N(2)-succinylarginine into N(2)-succinylornithine, ammonia and CO(2). In Acinetobacter baylyi (strain ATCC 33305 / BD413 / ADP1), this protein is N-succinylarginine dihydrolase.